We begin with the raw amino-acid sequence, 124 residues long: Small ribosomal subunit protein uS12 (124 aa).

Aspartate 89 bears the 3-methylthioaspartic acid mark. The interval 105–124 is disordered; the sequence is QGVKNRGQARSRYGAKKEKK. The segment covering 111–124 has biased composition (basic residues); the sequence is GQARSRYGAKKEKK.

It belongs to the universal ribosomal protein uS12 family. Part of the 30S ribosomal subunit. Contacts proteins S8 and S17. May interact with IF1 in the 30S initiation complex.

Functionally, with S4 and S5 plays an important role in translational accuracy. Interacts with and stabilizes bases of the 16S rRNA that are involved in tRNA selection in the A site and with the mRNA backbone. Located at the interface of the 30S and 50S subunits, it traverses the body of the 30S subunit contacting proteins on the other side and probably holding the rRNA structure together. The combined cluster of proteins S8, S12 and S17 appears to hold together the shoulder and platform of the 30S subunit. The chain is Small ribosomal subunit protein uS12 from Micrococcus luteus (Micrococcus lysodeikticus).